Consider the following 306-residue polypeptide: Cell division protein ZipA (306 aa).

The Periplasmic portion of the chain corresponds to 1–6; that stretch reads MENLQL. The chain crosses the membrane as a helical span at residues 7 to 27; it reads VLLLIGAIAIIAVLVHGFWSI. Topologically, residues 28 to 306 are cytoplasmic; sequence RKQQPKGYKQ…NYIQRIRAQA (279 aa).

This sequence belongs to the ZipA family. In terms of assembly, interacts with FtsZ via their C-terminal domains.

The protein resides in the cell inner membrane. Essential cell division protein that stabilizes the FtsZ protofilaments by cross-linking them and that serves as a cytoplasmic membrane anchor for the Z ring. Also required for the recruitment to the septal ring of downstream cell division proteins. The polypeptide is Cell division protein ZipA (Shewanella halifaxensis (strain HAW-EB4)).